Here is a 339-residue protein sequence, read N- to C-terminus: MNEDLFYDRLHQRCPGKYLLEELETSKSNDVLHASRFVCEMELVQKTNAYYCKTIVKMLLDHEWIFAKAFTIVNDGEDEIEIYDYLYEKYIKLLSTGKPDPMMKDVVRYRFDEDVKIKIEETPNLISAASTTGFRTWEAALYMGDFLIHKPLQELAPVQGQDDGKKKLNVLEVGAGTGIVSLVILQKYHEFVNKMYVTDGDSNLVETQLKRNFELNNEVRENEPDIKLQRLWWGSDRVPEDIDLVVGADVTYDPTILPDLCECLAECLALDRCKLCLLSATIRSESTVQLFSQECNKLGLKCTIVTSTEYDANNEIRAMKALQFKPLIAPIRIYKITKQ.

S-adenosyl-L-methionine-binding positions include tryptophan 137 and 174-176 (GAG). Threonine 177 bears the Phosphothreonine mark. Residues aspartate 199, tryptophan 233, and alanine 248 each contribute to the S-adenosyl-L-methionine site.

Belongs to the class I-like SAM-binding methyltransferase superfamily. EEF2KMT family.

The protein localises to the cytoplasm. In terms of biological role, S-adenosyl-L-methionine-dependent protein-lysine N-methyltransferase that mono-, di- and trimethylates elongation factor 2 (EFT1/EFT2) at 'Lys-509'. In Saccharomyces cerevisiae (strain ATCC 204508 / S288c) (Baker's yeast), this protein is Protein-lysine N-methyltransferase EFM3.